Here is a 426-residue protein sequence, read N- to C-terminus: D-tagatose-1,6-bisphosphate aldolase subunit KbaZ (426 aa).

This sequence belongs to the GatZ/KbaZ family. KbaZ subfamily. In terms of assembly, forms a complex with KbaY.

The protein operates within carbohydrate metabolism; D-tagatose 6-phosphate degradation; D-glyceraldehyde 3-phosphate and glycerone phosphate from D-tagatose 6-phosphate: step 2/2. Its function is as follows. Component of the tagatose-1,6-bisphosphate aldolase KbaYZ that is required for full activity and stability of the Y subunit. Could have a chaperone-like function for the proper and stable folding of KbaY. When expressed alone, KbaZ does not show any aldolase activity. This chain is D-tagatose-1,6-bisphosphate aldolase subunit KbaZ, found in Escherichia coli (strain 55989 / EAEC).